The following is a 462-amino-acid chain: Glycerol-3-phosphate acyltransferase ATS12, chloroplastic (462 aa).

A chloroplast-targeting transit peptide spans 1–82; sequence MFILSSSSST…DKESAQSAAT (82 aa). Positions 233 to 238 match the HXXXXD motif motif; the sequence is HQTEAD.

It belongs to the GPAT/DAPAT family.

Its subcellular location is the plastid. It localises to the chloroplast stroma. The enzyme catalyses a fatty acyl-[ACP] + sn-glycerol 3-phosphate = a 1-acyl-sn-glycero-3-phosphate + holo-[ACP]. The catalysed reaction is sn-glycerol 3-phosphate + an acyl-CoA = a 1-acyl-sn-glycero-3-phosphate + CoA. The protein operates within phospholipid metabolism; CDP-diacylglycerol biosynthesis; CDP-diacylglycerol from sn-glycerol 3-phosphate: step 1/3. In terms of biological role, esterifies the acyl-group from acyl-acyl carrier proteins (acyl-ACPs) to the sn-1 position of glycerol-3-phosphate. The physiological acyl donors in chloroplasts are acyl-ACPs, but acyl-CoAs are used as artificial donor for in vitro reactions. The enzyme from chilling-resistant plants discriminates against non-fluid palmitic acid and selects oleic acid whereas the enzyme from sensitive plants accepts both fatty acids. Squash is chilling-sensitive. Does not seem to discriminate between the acyl-ACP thioesters 18:1-ACP, 18:0-ACP and 16:0-ACP. Exhibits higher selectivity for 16:0-CoA than 18:1-CoA in vitro. This is Glycerol-3-phosphate acyltransferase ATS12, chloroplastic from Cucurbita moschata (Winter crookneck squash).